A 356-amino-acid chain; its full sequence is DNA polymerase IV (356 aa).

Residues 1-188 (MDTSRKIIHI…IPVTKFYGVG (188 aa)) form the UmuC domain. Residues Asp-11 and Asp-106 each contribute to the Mg(2+) site. Residue Glu-107 is part of the active site.

The protein belongs to the DNA polymerase type-Y family. As to quaternary structure, monomer. Mg(2+) serves as cofactor.

It localises to the cytoplasm. It catalyses the reaction DNA(n) + a 2'-deoxyribonucleoside 5'-triphosphate = DNA(n+1) + diphosphate. In terms of biological role, poorly processive, error-prone DNA polymerase involved in untargeted mutagenesis. Copies undamaged DNA at stalled replication forks, which arise in vivo from mismatched or misaligned primer ends. These misaligned primers can be extended by PolIV. Exhibits no 3'-5' exonuclease (proofreading) activity. May be involved in translesional synthesis, in conjunction with the beta clamp from PolIII. The chain is DNA polymerase IV from Listeria innocua serovar 6a (strain ATCC BAA-680 / CLIP 11262).